A 581-amino-acid chain; its full sequence is Dehydrocurvularin exporter (581 aa).

Residues 1 to 10 (MTDSPSLESN) show a composition bias toward polar residues. Residues 1 to 47 (MTDSPSLESNNKSDMDTPRPPASSHDEHDAAESVSEKQDSATTSPTG) form a disordered region. Asn-11 carries an N-linked (GlcNAc...) asparagine glycan. Over residues 24 to 39 (SHDEHDAAESVSEKQD) the composition is skewed to basic and acidic residues. A run of 14 helical transmembrane segments spans residues 61–81 (LVMF…GIIA), 96–116 (DVGW…PLWG), 126–146 (WVYL…AAAP), 159–179 (GWGA…VAPP), 184–204 (LLIG…PVIG), 215–235 (WCFW…LLFL), 251–271 (IILN…VCLT), 288–308 (VIAT…VEWL), 330–350 (IFCL…PIYF), 363–383 (VNTL…GGAI), 392–412 (YELA…ILDV), 424–444 (VLFG…VQGF), 456–476 (IMVM…QSLF), and 527–547 (VFAF…LIPF). The tract at residues 552–581 (DHEKKPSKDAMASDEVKASEEVQQEKKVTV) is disordered. Residues 565–581 (DEVKASEEVQQEKKVTV) are compositionally biased toward basic and acidic residues.

The protein belongs to the major facilitator superfamily. TCR/Tet family.

It localises to the cell membrane. Efflux pump that is probably involved in the export of dehydrocurvularin. The chain is Dehydrocurvularin exporter from Alternaria cinerariae.